The following is a 175-amino-acid chain: Ribosome maturation factor RimM (175 aa).

The 75-residue stretch at 93 to 167 (DDEFYYSDLI…YIIITLPEVI (75 aa)) folds into the PRC barrel domain.

It belongs to the RimM family. As to quaternary structure, binds ribosomal protein uS19.

The protein localises to the cytoplasm. Functionally, an accessory protein needed during the final step in the assembly of 30S ribosomal subunit, possibly for assembly of the head region. Essential for efficient processing of 16S rRNA. May be needed both before and after RbfA during the maturation of 16S rRNA. It has affinity for free ribosomal 30S subunits but not for 70S ribosomes. The chain is Ribosome maturation factor RimM from Ehrlichia chaffeensis (strain ATCC CRL-10679 / Arkansas).